Reading from the N-terminus, the 330-residue chain is Methylthioribose-1-phosphate isomerase (330 aa).

Substrate is bound by residues 49 to 51 (RGA), R83, and Q179. D220 acts as the Proton donor in catalysis. Position 230–231 (230–231 (NK)) interacts with substrate.

The protein belongs to the eIF-2B alpha/beta/delta subunits family. MtnA subfamily.

It carries out the reaction 5-(methylsulfanyl)-alpha-D-ribose 1-phosphate = 5-(methylsulfanyl)-D-ribulose 1-phosphate. The protein operates within amino-acid biosynthesis; L-methionine biosynthesis via salvage pathway; L-methionine from S-methyl-5-thio-alpha-D-ribose 1-phosphate: step 1/6. Its function is as follows. Catalyzes the interconversion of methylthioribose-1-phosphate (MTR-1-P) into methylthioribulose-1-phosphate (MTRu-1-P). This chain is Methylthioribose-1-phosphate isomerase, found in Thermus thermophilus (strain ATCC 27634 / DSM 579 / HB8).